The following is a 74-amino-acid chain: Exodeoxyribonuclease 7 small subunit (74 aa).

The protein belongs to the XseB family. In terms of assembly, heterooligomer composed of large and small subunits.

It localises to the cytoplasm. It catalyses the reaction Exonucleolytic cleavage in either 5'- to 3'- or 3'- to 5'-direction to yield nucleoside 5'-phosphates.. Bidirectionally degrades single-stranded DNA into large acid-insoluble oligonucleotides, which are then degraded further into small acid-soluble oligonucleotides. The chain is Exodeoxyribonuclease 7 small subunit from Haemophilus ducreyi (strain 35000HP / ATCC 700724).